The chain runs to 305 residues: tRNA dimethylallyltransferase (305 aa).

9–16 provides a ligand contact to ATP; it reads GPTASGKS. 11-16 provides a ligand contact to substrate; that stretch reads TASGKS. The interval 34 to 37 is interaction with substrate tRNA; that stretch reads DSKQ.

It belongs to the IPP transferase family. In terms of assembly, monomer. Mg(2+) is required as a cofactor.

It catalyses the reaction adenosine(37) in tRNA + dimethylallyl diphosphate = N(6)-dimethylallyladenosine(37) in tRNA + diphosphate. In terms of biological role, catalyzes the transfer of a dimethylallyl group onto the adenine at position 37 in tRNAs that read codons beginning with uridine, leading to the formation of N6-(dimethylallyl)adenosine (i(6)A). The chain is tRNA dimethylallyltransferase from Anaplasma marginale (strain Florida).